The following is a 360-amino-acid chain: Tryptophan--tRNA ligase, mitochondrial (360 aa).

The transit peptide at 1–18 (MALHSMRKARERWSFIRA) directs the protein to the mitochondrion. ATP contacts are provided by residues Q42 and 48–51 (HLGN). L-tryptophan is bound at residue D167. Residues 179–181 (GED), V217, and 226–230 (KMSKS) each bind ATP.

The protein belongs to the class-I aminoacyl-tRNA synthetase family. As to expression, brain.

It is found in the mitochondrion matrix. The protein resides in the mitochondrion. It catalyses the reaction tRNA(Trp) + L-tryptophan + ATP = L-tryptophyl-tRNA(Trp) + AMP + diphosphate + H(+). In terms of biological role, catalyzes the attachment of tryptophan to tRNA(Trp) in a two-step reaction: tryptophan is first activated by ATP to form Trp-AMP and then transferred to the acceptor end of tRNA(Trp). In Homo sapiens (Human), this protein is Tryptophan--tRNA ligase, mitochondrial (WARS2).